The following is a 43-amino-acid chain: Potassium channel toxin gamma-KTx 4.13 (43 aa).

Disulfide bonds link Cys-5–Cys-23, Cys-11–Cys-34, Cys-20–Cys-39, and Cys-24–Cys-41.

Belongs to the ergtoxin family. Gamma-KTx 4 subfamily. As to expression, expressed by the venom gland.

It is found in the secreted. Functionally, reversibly blocks Kv11/ERG potassium channels. This Centruroides noxius (Mexican scorpion) protein is Potassium channel toxin gamma-KTx 4.13.